We begin with the raw amino-acid sequence, 183 residues long: Ferredoxin-2, mitochondrial (183 aa).

The N-terminal 52 residues, 1–52 (MAASVAWGGVNAGFLLRAARGAWWSRPGGFWGSGEAAAPAIARKFRATGSRP), are a transit peptide targeting the mitochondrion. Residues 68 to 170 (VNVVFVDRSG…GAEFTLPKIT (103 aa)) enclose the 2Fe-2S ferredoxin-type domain. The [2Fe-2S] cluster site is built by Cys105, Cys111, Cys114, and Cys151.

It belongs to the adrenodoxin/putidaredoxin family. In terms of assembly, component of the mitochondrial core iron-sulfur cluster (ISC) complex composed of NFS1, LYRM4, NDUFAB1, ISCU, FXN, and FDX2; this complex is a heterohexamer containing two copies of each monomer. Form a heterodimer complex with NFS1. Interacts (in both their reduced and oxidized states) with the cysteine desulfurase (NFS1:LYRM4) complex; this interaction stimulates cysteine desulfurase activity, and serves as a reductant for Fe-S cluster assembly. It depends on [2Fe-2S] cluster as a cofactor.

The protein localises to the mitochondrion. It localises to the mitochondrion matrix. In terms of biological role, electron donor, of the core iron-sulfur cluster (ISC) assembly complex, that acts to reduce the persulfide into sulfide during [2Fe-2S] clusters assembly on the scaffolding protein ISCU. The core iron-sulfur cluster (ISC) assembly complex is involved in the de novo synthesis of a [2Fe-2S] cluster, the first step of the mitochondrial iron-sulfur protein biogenesis. This process is initiated by the cysteine desulfurase complex (NFS1:LYRM4:NDUFAB1) that produces persulfide which is delivered on the scaffold protein ISCU in a FXN-dependent manner. Then this complex is stabilized by FDX2 which provides reducing equivalents to accomplish the [2Fe-2S] cluster assembly. Finally, the [2Fe-2S] cluster is transferred from ISCU to chaperone proteins, including HSCB, HSPA9 and GLRX5. Essential for coenzyme Q biosynthesis: together with FDXR, transfers the electrons required for the hydroxylation reaction performed by COQ6. This chain is Ferredoxin-2, mitochondrial, found in Bos taurus (Bovine).